The primary structure comprises 392 residues: Integrin-linked kinase-associated serine/threonine phosphatase 2C (392 aa).

M1 is modified (N-acetylmethionine). Residues 1–90 (MDLFGDLPEP…TSEEEKNGSE (90 aa)) form a disordered region. S13 is subject to Phosphoserine. Positions 56–70 (SGDSGSLATSISQMV) are enriched in polar residues. Over residues 72–90 (TEGKGAKRKTSEEEKNGSE) the composition is skewed to basic and acidic residues. The region spanning 108-390 (KGYVAERKGE…DNVTVMVVRI (283 aa)) is the PPM-type phosphatase domain. Mn(2+)-binding residues include D152 and G153. An N6-acetyllysine modification is found at K210. Mn(2+) contacts are provided by D326 and D381.

Belongs to the PP2C family. Interacts with ILK. Specific association with ILK is independent of the catalytic activity of either partner. Mg(2+) serves as cofactor. Requires Mn(2+) as cofactor. As to expression, widely expressed. Highest levels expressed in striated muscle. Much lower levels evident in various smooth muscle tissues.

It is found in the cytoplasm. The enzyme catalyses O-phospho-L-seryl-[protein] + H2O = L-seryl-[protein] + phosphate. The catalysed reaction is O-phospho-L-threonyl-[protein] + H2O = L-threonyl-[protein] + phosphate. Its activity is regulated as follows. Inhibited rather than stimulated by magnesium. In terms of biological role, protein phosphatase that may play a role in regulation of cell cycle progression via dephosphorylation of its substrates whose appropriate phosphorylation states might be crucial for cell proliferation. Selectively associates with integrin linked kinase (ILK), to modulate cell adhesion and growth factor signaling. Inhibits the ILK-GSK3B signaling axis and may play an important role in inhibiting oncogenic transformation. The chain is Integrin-linked kinase-associated serine/threonine phosphatase 2C (ILKAP) from Homo sapiens (Human).